Consider the following 206-residue polypeptide: Phosphoribosylglycinamide formyltransferase (206 aa).

Gly13–Asn15 provides a ligand contact to N(1)-(5-phospho-beta-D-ribosyl)glycinamide. Residues Met99–Leu102 and Asn121 each bind (6R)-10-formyltetrahydrofolate. His123 acts as the Proton donor in catalysis. Asp163 is a binding site for (6R)-10-formyltetrahydrofolate. Glu192 contributes to the N(1)-(5-phospho-beta-D-ribosyl)glycinamide binding site.

It belongs to the GART family.

It catalyses the reaction N(1)-(5-phospho-beta-D-ribosyl)glycinamide + (6R)-10-formyltetrahydrofolate = N(2)-formyl-N(1)-(5-phospho-beta-D-ribosyl)glycinamide + (6S)-5,6,7,8-tetrahydrofolate + H(+). The protein operates within purine metabolism; IMP biosynthesis via de novo pathway; N(2)-formyl-N(1)-(5-phospho-D-ribosyl)glycinamide from N(1)-(5-phospho-D-ribosyl)glycinamide (10-formyl THF route): step 1/1. This chain is Phosphoribosylglycinamide formyltransferase (purN), found in Dictyostelium discoideum (Social amoeba).